Reading from the N-terminus, the 396-residue chain is Elongation factor Tu 2 (396 aa).

A tr-type G domain is found at Lys-10 to Glu-206. Residues Gly-19 to Thr-26 are G1. Position 19–26 (Gly-19–Thr-26) interacts with GTP. Thr-26 serves as a coordination point for Mg(2+). Positions Gly-60–Ser-64 are G2. Residues Asp-81–Gly-84 are G3. GTP is bound by residues Asp-81–His-85 and Asn-136–Asp-139. The tract at residues Asn-136–Asp-139 is G4. Residues Ser-174–Leu-176 are G5.

Belongs to the TRAFAC class translation factor GTPase superfamily. Classic translation factor GTPase family. EF-Tu/EF-1A subfamily. Monomer.

Its subcellular location is the cytoplasm. It catalyses the reaction GTP + H2O = GDP + phosphate + H(+). Its function is as follows. GTP hydrolase that promotes the GTP-dependent binding of aminoacyl-tRNA to the A-site of ribosomes during protein biosynthesis. This is Elongation factor Tu 2 from Rhodospirillum rubrum (strain ATCC 11170 / ATH 1.1.1 / DSM 467 / LMG 4362 / NCIMB 8255 / S1).